The following is a 740-amino-acid chain: E3 ubiquitin-protein ligase TRIM9 (740 aa).

Residues 7–30 form an RING-type; degenerate zinc finger; it reads CPTCKQLYANPVLLPCFHALCLGC. The span at 64-73 shows a compositional bias: gly residues; that stretch reads GNGGGAGGGA. Residues 64-114 form a disordered region; the sequence is GNGGGAGGGAAAPVTNPNGPGTRHSSHSSAASTASSNTGSESVTSDQDQSD. Low complexity predominate over residues 74–105; that stretch reads AAPVTNPNGPGTRHSSHSSAASTASSNTGSES. The segment at 195 to 244 adopts a B box-type 1; atypical zinc-finger fold; that stretch reads REALRCQMCETDPKVASLICEQCEIRYCDACRELTHPARGPLAKHTLVKP. Positions 200, 203, 225, 230, 255, 258, 277, and 283 each coordinate Zn(2+). A B box-type 2 zinc finger spans residues 250–291; it reads QRESVCGEHEETLSQYCLSCKAPACGLCIGELRHQAHDVQSI. Positions 294-324 form a coiled coil; it reads TCKAQKTELSHNLQQLSEKARSTTEFIQRLK. Residues 399-459 form the COS domain; the sequence is LKETDSAAFL…ARAIDNLNFI (61 aa). Residues 474 to 567 form the Fibronectin type-III domain; it reads APMTPTILPS…ELIGLQTAEV (94 aa). The 188-residue stretch at 549–736 folds into the B30.2/SPRY domain; sequence NSAGEGEYSE…TMHTAMDAPK (188 aa).

Belongs to the TRIM/RBCC family. Interacts (via fibronectin type-III domain) with pico. Interacts (via SPRY domain) with netrin receptor fra.

It is found in the cell projection. It localises to the axon. The protein resides in the perikaryon. It carries out the reaction S-ubiquitinyl-[E2 ubiquitin-conjugating enzyme]-L-cysteine + [acceptor protein]-L-lysine = [E2 ubiquitin-conjugating enzyme]-L-cysteine + N(6)-ubiquitinyl-[acceptor protein]-L-lysine.. The protein operates within protein modification; protein ubiquitination. E3 ubiquitin-protein ligase activity. During embryonic and larval development, regulates the pattern of axonal projections of class IV nociceptive sensory neurons (C4da) downstream of netrin receptor fra. Regulates fine-scale topography of C4da axon terminals upon neuronal activity. During eye development, consolidates the attachment of R8 photoreceptor growth cones to the target medulla layer, probably downstream of fra. The protein is E3 ubiquitin-protein ligase TRIM9 of Drosophila melanogaster (Fruit fly).